The primary structure comprises 820 residues: Cation/H(+) antiporter 17 (820 aa).

Transmembrane regions (helical) follow at residues 30 to 50 (LPLLILQICIVLLLTRLLAFL), 58 to 75 (RVIAEIVGGILLGPSALG), 90 to 110 (LTVLDTLANLGLIFFLFLVGL), 124 to 144 (ALSIALAGITLPFVLGIGTSF), 159 to 179 (FLVFMGVALSITAFPVLARIL), 192 to 212 (IALSAAAVNDVAAWILLALAV), 222 to 242 (LTSLWVFLSGCGFVLFCIFVV), 276 to 296 (FVTDFIGIHALFGAFVIGVIF), 313 to 333 (LVSGLFLPLYFVSSGLKTNVA), 342 to 362 (GLLVLVIFNACFGKIIGTVLV), 374 to 394 (LALGFLMNTKGLVELIVLNIG), and 404 to 424 (IFAIMVLMAIFTTFMTTPLVL). Phosphoserine occurs at positions 817 and 819.

Belongs to the monovalent cation:proton antiporter 2 (CPA2) transporter (TC 2.A.37) family. CHX (TC 2.A.37.4) subfamily. As to expression, predominantly expressed in epidermal and cortical cells of mature roots but also barely detected in leaves.

The protein localises to the membrane. Its function is as follows. Operates as a K(+)/H(+) antiporter that controls K(+) acquisition and homeostasis. The protein is Cation/H(+) antiporter 17 (CHX17) of Arabidopsis thaliana (Mouse-ear cress).